Here is a 228-residue protein sequence, read N- to C-terminus: Dolichyl-phosphate hexose transferase HVO_1613 (228 aa).

This sequence belongs to the glycosyltransferase 2 family.

Its function is as follows. Glycosyltransferase that adds a monosaccharide to dolichol phosphate, thereby being responsible for generating one of the three monosaccharide-modified dolichol phosphates. The subunit onto which additional sugars are added is not known. This is Dolichyl-phosphate hexose transferase HVO_1613 from Haloferax volcanii (strain ATCC 29605 / DSM 3757 / JCM 8879 / NBRC 14742 / NCIMB 2012 / VKM B-1768 / DS2) (Halobacterium volcanii).